The sequence spans 365 residues: tRNA-specific 2-thiouridylase MnmA (365 aa).

Residues 6 to 13 (AMSGGVDS) and Leu32 each bind ATP. Cys101 acts as the Nucleophile in catalysis. Cys101 and Cys199 are oxidised to a cystine. Gly125 lines the ATP pocket. Residues 149–151 (KDQ) form an interaction with tRNA region. The active-site Cysteine persulfide intermediate is the Cys199.

The protein belongs to the MnmA/TRMU family.

It localises to the cytoplasm. It carries out the reaction S-sulfanyl-L-cysteinyl-[protein] + uridine(34) in tRNA + AH2 + ATP = 2-thiouridine(34) in tRNA + L-cysteinyl-[protein] + A + AMP + diphosphate + H(+). Its function is as follows. Catalyzes the 2-thiolation of uridine at the wobble position (U34) of tRNA, leading to the formation of s(2)U34. This is tRNA-specific 2-thiouridylase MnmA from Corynebacterium efficiens (strain DSM 44549 / YS-314 / AJ 12310 / JCM 11189 / NBRC 100395).